We begin with the raw amino-acid sequence, 126 residues long: Protein ApaG (126 aa).

Residues 2–126 (DVIQPCIKIQ…FRLAIPNVLN (125 aa)) enclose the ApaG domain.

This Vibrio campbellii (strain ATCC BAA-1116) protein is Protein ApaG.